The sequence spans 160 residues: Ribosomal RNA large subunit methyltransferase H (160 aa).

S-adenosyl-L-methionine is bound by residues glycine 108 and 127–132 (FGLMTW).

The protein belongs to the RNA methyltransferase RlmH family. As to quaternary structure, homodimer.

The protein localises to the cytoplasm. The catalysed reaction is pseudouridine(1915) in 23S rRNA + S-adenosyl-L-methionine = N(3)-methylpseudouridine(1915) in 23S rRNA + S-adenosyl-L-homocysteine + H(+). Specifically methylates the pseudouridine at position 1915 (m3Psi1915) in 23S rRNA. This chain is Ribosomal RNA large subunit methyltransferase H, found in Bartonella bacilliformis (strain ATCC 35685 / KC583 / Herrer 020/F12,63).